We begin with the raw amino-acid sequence, 145 residues long: Large ribosomal subunit protein uL11 (145 aa).

This sequence belongs to the universal ribosomal protein uL11 family. Part of the ribosomal stalk of the 50S ribosomal subunit. Interacts with L10 and the large rRNA to form the base of the stalk. L10 forms an elongated spine to which L12 dimers bind in a sequential fashion forming a multimeric L10(L12)X complex. One or more lysine residues are methylated.

Functionally, forms part of the ribosomal stalk which helps the ribosome interact with GTP-bound translation factors. This is Large ribosomal subunit protein uL11 from Persephonella marina (strain DSM 14350 / EX-H1).